Reading from the N-terminus, the 376-residue chain is Probable dual-specificity RNA methyltransferase RlmN (376 aa).

A disordered region spans residues 1 to 25 (MSDSERTSLPLVFDEPRGRKKPPRH). Glu113 acts as the Proton acceptor in catalysis. Positions 119–362 (YPDRATMCVS…PTTVRDTRGR (244 aa)) constitute a Radical SAM core domain. The cysteines at positions 126 and 368 are disulfide-linked. [4Fe-4S] cluster is bound by residues Cys133, Cys137, and Cys140. Residues 188–189 (GE), Ser222, 245–247 (SLH), and Asn325 each bind S-adenosyl-L-methionine. The S-methylcysteine intermediate role is filled by Cys368.

It belongs to the radical SAM superfamily. RlmN family. The cofactor is [4Fe-4S] cluster.

Its subcellular location is the cytoplasm. It carries out the reaction adenosine(2503) in 23S rRNA + 2 reduced [2Fe-2S]-[ferredoxin] + 2 S-adenosyl-L-methionine = 2-methyladenosine(2503) in 23S rRNA + 5'-deoxyadenosine + L-methionine + 2 oxidized [2Fe-2S]-[ferredoxin] + S-adenosyl-L-homocysteine. The catalysed reaction is adenosine(37) in tRNA + 2 reduced [2Fe-2S]-[ferredoxin] + 2 S-adenosyl-L-methionine = 2-methyladenosine(37) in tRNA + 5'-deoxyadenosine + L-methionine + 2 oxidized [2Fe-2S]-[ferredoxin] + S-adenosyl-L-homocysteine. Specifically methylates position 2 of adenine 2503 in 23S rRNA and position 2 of adenine 37 in tRNAs. In Nocardioides sp. (strain ATCC BAA-499 / JS614), this protein is Probable dual-specificity RNA methyltransferase RlmN.